A 340-amino-acid chain; its full sequence is Thylakoidal processing peptidase 1, chloroplastic (340 aa).

The transit peptide at 1-52 (MAIRITFTYSTHVARNLVGTRVGPGGYCFESLVRPRFFSHKRDFDRSPRNRP) directs the protein to the chloroplast. A helical transmembrane segment spans residues 155–175 (EDAKAAFTAVTVSILFRSALA). Residues 176–340 (EPKSIPSTSM…AITRGPVAVS (165 aa)) lie on the Lumenal, thylakoid side of the membrane. Ser184 is a catalytic residue.

It belongs to the peptidase S26 family.

It is found in the plastid. The protein localises to the chloroplast thylakoid membrane. The catalysed reaction is Cleavage of hydrophobic, N-terminal signal or leader sequences from secreted and periplasmic proteins.. Its function is as follows. Cleaves the thylakoid-transfer domain from a chloroplast protein. The protein is Thylakoidal processing peptidase 1, chloroplastic (TPP1) of Arabidopsis thaliana (Mouse-ear cress).